A 381-amino-acid polypeptide reads, in one-letter code: MYINYLKDLIGFKSVTPKSDGAIEYIDDLLKQHGFKTEIKIFGDSKSEQVTNLYAVFGSNEPNICFVGHVDVVLAGNHELWHNASPFKASQQDDKIYGRGAVDMKGAIACFLAASLDFIKNNTDFKGSISFLLTSDEEGKAKHGTKEMLQYIYDQGYKINFAIVGEPTCEKEIGDAIKIGRRGSVNFKLNIEGLSGHVAYPHKANNPLPCLIIILNELTNIKLDEGIEFFQRSNLEVTNIEVSNNTSNVIPASTEASFNIRFNNLHSAETLAKQVEEIIKQHCKEYKVDYKLEYSSSAESFIQNPSDKIKEFAKVVEHTLKIKPEFSTSGGTSDARFVKNYCPLVEFGLLSETAHKINEYTKISDLQKLYDVYYNFLMEIL.

Histidine 69 contributes to the Zn(2+) binding site. Aspartate 71 is a catalytic residue. Aspartate 103 is a Zn(2+) binding site. Residue glutamate 137 is the Proton acceptor of the active site. Zn(2+)-binding residues include glutamate 138, glutamate 166, and histidine 355.

This sequence belongs to the peptidase M20A family. DapE subfamily. In terms of assembly, homodimer. Zn(2+) serves as cofactor. Requires Co(2+) as cofactor.

The enzyme catalyses N-succinyl-(2S,6S)-2,6-diaminopimelate + H2O = (2S,6S)-2,6-diaminopimelate + succinate. It participates in amino-acid biosynthesis; L-lysine biosynthesis via DAP pathway; LL-2,6-diaminopimelate from (S)-tetrahydrodipicolinate (succinylase route): step 3/3. Functionally, catalyzes the hydrolysis of N-succinyl-L,L-diaminopimelic acid (SDAP), forming succinate and LL-2,6-diaminopimelate (DAP), an intermediate involved in the bacterial biosynthesis of lysine and meso-diaminopimelic acid, an essential component of bacterial cell walls. This chain is Succinyl-diaminopimelate desuccinylase, found in Rickettsia massiliae (strain Mtu5).